The sequence spans 254 residues: Glc operon transcriptional activator (254 aa).

The region spanning 6 to 74 (RPICEVVAES…QGRDSRVARL (69 aa)) is the HTH gntR-type domain. Positions 34–53 (ERRLCEKLGFSRSALREGLT) form a DNA-binding region, H-T-H motif.

In terms of biological role, transcriptional activator of the glcDEFGB operon which is associated with glycolate utilization, and encodes malate synthase G and the genes needed for glycolate oxidase activity. Also negatively regulates the transcription of its own gene. Glycolate acts as an effector, but GlcC can also use acetate as an alternative effector. This Escherichia coli O6:H1 (strain CFT073 / ATCC 700928 / UPEC) protein is Glc operon transcriptional activator (glcC).